The following is a 188-amino-acid chain: MATAEKPVLTRYKDRMDKAVLSLKEDFAGLRTGRASSGLLDQIMVNAYGSMVQLNTVASISVPEPRQINVNIWDKGVVSAVEKAIRNSDLGLNPVVEGNNLRIPIPPLTEERRKDLVKIAGKYAEAQKVAVRNIRRDANDDLKKAEKASVISEDELKKMETEVQKITDGAIKQVDEALKTKEQEIMQV.

This sequence belongs to the RRF family.

It localises to the cytoplasm. Its function is as follows. Responsible for the release of ribosomes from messenger RNA at the termination of protein biosynthesis. May increase the efficiency of translation by recycling ribosomes from one round of translation to another. The polypeptide is Ribosome-recycling factor (Caulobacter sp. (strain K31)).